Consider the following 358-residue polypeptide: Beta-lactamase (358 aa).

The Acyl-ester intermediate role is filled by Ser60. The active-site Proton acceptor is Tyr146. 311–313 is a substrate binding site; sequence KTG.

The protein belongs to the class-C beta-lactamase family.

It is found in the periplasm. The catalysed reaction is a beta-lactam + H2O = a substituted beta-amino acid. In terms of biological role, this protein is a serine beta-lactamase with a substrate specificity for cephalosporins. The sequence is that of Beta-lactamase from Pseudomonas fluorescens.